A 560-amino-acid polypeptide reads, in one-letter code: Interferon alpha/beta receptor 1 (560 aa).

Positions 1-24 are cleaved as a signal peptide; sequence MLGLLGATTLMLVAGAPWVLPAGG. Topologically, residues 25 to 437 are extracellular; the sequence is ADLRSPENVV…EKTKPGSTSQ (413 aa). Fibronectin type-III domains are found at residues 29–125, 133–224, 231–329, and 333–433; these read SPEN…FQEA, HLEA…INTT, SPEN…TEMQ, and FPPV…TKPG. N55 is a glycosylation site (N-linked (GlcNAc...) asparagine). The cysteines at positions 76 and 84 are disulfide-linked. 3 N-linked (GlcNAc...) asparagine glycosylation sites follow: N85, N108, and N172. C199 and C220 are oxidised to a cystine. 3 N-linked (GlcNAc...) asparagine glycosylation sites follow: N222, N249, and N254. Cysteines 283 and 291 form a disulfide. N313, N377, and N417 each carry an N-linked (GlcNAc...) asparagine glycan. C404 and C427 are disulfide-bonded. The chain crosses the membrane as a helical span at residues 438–458; that stretch reads AWLIAGILSAILLFPAVFYGV. The Cytoplasmic segment spans residues 459-560; it reads KVVSRCINYV…GEEILRQAAV (102 aa). C464 is lipidated: S-palmitoyl cysteine. 2 positions are modified to phosphotyrosine; by TYK2: Y467 and Y482. Residues 492–501 form an important for interaction with TYK2 region; it reads LLSTSEEQTE. 2 positions are modified to phosphoserine: S496 and S536. The tract at residues 520 to 560 is disordered; the sequence is QIDDNHSRCSSQTNRDSGVYSNEDENSGSKIGEEILRQAAV. Positions 527–539 are enriched in polar residues; it reads RCSSQTNRDSGVY. A compositionally biased stretch (basic and acidic residues) spans 550 to 560; that stretch reads IGEEILRQAAV.

The protein belongs to the type II cytokine receptor family. As to quaternary structure, heterodimer with IFNAR2; forming the receptor for type I interferon. Interacts with TYK2. Interacts with STAT1 and STAT2; the interaction requires its phosphorylation at Tyr-482. Interacts (serine-phosphorylated form) with FBXW11, the substrate recognition component of a SCF (SKP1-CUL1-F-box protein) E3 ubiquitin-protein ligase complex. Interacts with SHMT2; this promotes interaction with ABRAXAS2 and the BRISC complex. Interacts with TRIM10; this interaction prevents association between IFNAR1 and TYK2. Ubiquitinated, leading to its internalization and degradation. Polyubiquitinated via 'Lys-48'-linked and 'Lys-63'-linked ubiquitin chains, leading to receptor internalization and lysosomal degradation. The 'Lys-63'-linked ubiquitin chains are cleaved off by the BRISC complex. Post-translationally, phosphorylated on tyrosine residues in response to interferon-binding: phosphorylation by TYK2 tyrosine kinase creates docking sites for STAT proteins. Phosphorylated on serine residues in response to interferon binding; this promotes interaction with FBXW11 and ubiquitination. In terms of processing, palmitoylation at Cys-464 is required for the activation of STAT1 and STAT2.

It localises to the cell membrane. It is found in the late endosome. The protein localises to the lysosome. In terms of biological role, together with IFNAR2, forms the heterodimeric receptor for type I interferons (including interferons alpha, beta, epsilon, omega and kappa). Type I interferon binding activates the JAK-STAT signaling cascade, resulting in transcriptional activation or repression of interferon-regulated genes that encode the effectors of the interferon response. Mechanistically, type I interferon-binding brings the IFNAR1 and IFNAR2 subunits into close proximity with one another, driving their associated Janus kinases (JAKs) (TYK2 bound to IFNAR1 and JAK1 bound to IFNAR2) to cross-phosphorylate one another. The activated kinases phosphorylate specific tyrosine residues on the intracellular domains of IFNAR1 and IFNAR2, forming docking sites for the STAT transcription factors. STAT proteins are then phosphorylated by the JAKs, promoting their translocation into the nucleus to regulate expression of interferon-regulated genes. Can also act independently of IFNAR2: form an active IFNB1 receptor by itself and activate a signaling cascade that does not involve activation of the JAK-STAT pathway. The chain is Interferon alpha/beta receptor 1 (IFNAR1) from Sus scrofa (Pig).